Consider the following 227-residue polypeptide: Octanoyltransferase (227 aa).

One can recognise a BPL/LPL catalytic domain in the interval Ala43–Glu218. Substrate contacts are provided by residues Arg82–His89, Ser149–Gly151, and Gly162–Ala164. The active-site Acyl-thioester intermediate is Cys180.

It belongs to the LipB family.

Its subcellular location is the cytoplasm. The enzyme catalyses octanoyl-[ACP] + L-lysyl-[protein] = N(6)-octanoyl-L-lysyl-[protein] + holo-[ACP] + H(+). It functions in the pathway protein modification; protein lipoylation via endogenous pathway; protein N(6)-(lipoyl)lysine from octanoyl-[acyl-carrier-protein]: step 1/2. Functionally, catalyzes the transfer of endogenously produced octanoic acid from octanoyl-acyl-carrier-protein onto the lipoyl domains of lipoate-dependent enzymes. Lipoyl-ACP can also act as a substrate although octanoyl-ACP is likely to be the physiological substrate. The polypeptide is Octanoyltransferase (Shewanella denitrificans (strain OS217 / ATCC BAA-1090 / DSM 15013)).